Here is a 189-residue protein sequence, read N- to C-terminus: MFWLLALLAYLLGSLSFAIVLSRLSGSPDPRSCGSGNAGATNMLRLAGRKMAILTLLGDLCKGLLPVMLARLAGLDLQEQAWVGVCAVLGHLFPVYFRFQGGKGVATAAGMLMGLYFPAALLAIAAWLLTFYLTRTSSLAALIATPLTLPLLAWREPAALLPISVLTVMIVWRHRNNLRDLFAGRERHF.

The next 4 membrane-spanning stretches (helical) occupy residues 1 to 21 (MFWLLALLAYLLGSLSFAIVL), 77 to 97 (LQEQAWVGVCAVLGHLFPVYF), 111 to 131 (MLMGLYFPAALLAIAAWLLTF), and 151 to 171 (LLAWREPAALLPISVLTVMIV).

This sequence belongs to the PlsY family. As to quaternary structure, probably interacts with PlsX.

The protein localises to the cell inner membrane. The enzyme catalyses an acyl phosphate + sn-glycerol 3-phosphate = a 1-acyl-sn-glycero-3-phosphate + phosphate. The protein operates within lipid metabolism; phospholipid metabolism. Functionally, catalyzes the transfer of an acyl group from acyl-phosphate (acyl-PO(4)) to glycerol-3-phosphate (G3P) to form lysophosphatidic acid (LPA). This enzyme utilizes acyl-phosphate as fatty acyl donor, but not acyl-CoA or acyl-ACP. The protein is Glycerol-3-phosphate acyltransferase of Pseudomonas putida (strain W619).